An 847-amino-acid chain; its full sequence is Pollen-specific leucine-rich repeat extensin-like protein 2 (847 aa).

Residues 1–20 form the signal peptide; sequence MERPFGCFFILLLISYTVVA. 8 LRR repeats span residues 45-71, 106-130, 131-153, 155-178, 179-202, 204-224, 226-248, and 249-273; these read INKV…AWKK, LTVV…LGLM, TDLA…SLSK, ALMY…SLSW, PSLK…IFDK, LDAI…TIGK, KASV…IGNM, and KNLN…GLLN. N-linked (GlcNAc...) asparagine glycosylation is found at N260 and N274. 2 LRR repeats span residues 296-319 and 321-343; these read LASV…KFCK and PNLD…CVPG. The interval 381–847 is disordered; that stretch reads KDKCSGGSNG…SPPPPMFQGY (467 aa). A compositionally biased stretch (basic and acidic residues) spans 438–484; the sequence is PKHESPKPEEPENKHELPKQKESPKPQPSKPEDSPKPEQPKPEESPK. Pro residues-rich tracts occupy residues 485 to 499 and 533 to 642; these read PEQP…PVSP and VPPP…PPPT. Residues 522–847 form a contains the Ser-Pro(4) repeats region; sequence SPPPPKVEDT…SPPPPMFQGY (326 aa). Composition is skewed to polar residues over residues 667–682, 688–720, and 726–752; these read QVPT…QILS, TPVQ…SPVQ, and QAPT…SQAP. Low complexity-rich tracts occupy residues 768–783 and 797–811; these read PVQS…SSPE and NPSS…TDTS. Positions 838-847 are enriched in pro residues; the sequence is SPPPPMFQGY.

Post-translationally, hydroxylated on proline residues in the S-P-P-P-P repeat. In terms of processing, O-glycosylated on hydroxyprolines. As to expression, expressed in flowers, stamen, pollen, and pollinated carpels (at protein level).

It localises to the secreted. The protein resides in the cell wall. In terms of biological role, modulates cell morphogenesis by regulating cell wall formation and assembly, and/or growth polarization. This Arabidopsis thaliana (Mouse-ear cress) protein is Pollen-specific leucine-rich repeat extensin-like protein 2 (PEX2).